The primary structure comprises 369 residues: MPERDPILLTPGPLTTSRMTRDAMLRDWGSWDAAFNRLTKSVCADLVRIAGGGDAYVCVPLQGSGTFAVEATLGTLVPRDARVLVPNNGAYCARIAAILRRLGIAHVELPFAEDEPASAHAIDAALARDARLTHVALVHLETSAGLLNPLDDIAAVCRARGKALIVDAMSSFGALPIALAASGIDALISASGKCLEGVPGMGFAIVRRSALEAAEGRSPSVALDLHDQYAYMQRTSQWRFTPPTHVLAALRAALDQFFDEGGQPARGARYARNCATLVDGMRALGFEPFLDARAQASVIVTFYAPADPAYAFPAFYAAVRDAGYVLYPGKLTTADTFRVGCIGALGADEMRGAVAAIGGALESLGIAMR.

K193 bears the N6-(pyridoxal phosphate)lysine mark.

The protein belongs to the class-V pyridoxal-phosphate-dependent aminotransferase family. PhnW subfamily. In terms of assembly, homodimer. Requires pyridoxal 5'-phosphate as cofactor.

It catalyses the reaction (2-aminoethyl)phosphonate + pyruvate = phosphonoacetaldehyde + L-alanine. In terms of biological role, involved in phosphonate degradation. The chain is 2-aminoethylphosphonate--pyruvate transaminase from Burkholderia pseudomallei (strain 1106a).